The chain runs to 414 residues: Trafficking protein particle complex subunit 13 (414 aa).

The protein belongs to the TRAPPC13 family. In terms of assembly, part of the multisubunit TRAPP (transport protein particle) complex.

This is Trafficking protein particle complex subunit 13 (trappc13) from Xenopus laevis (African clawed frog).